A 109-amino-acid polypeptide reads, in one-letter code: Cysteine-rich venom protein 7 (109 aa).

A signal peptide spans 1-21; sequence MSKVFVIILVALMVAISIASA. Intrachain disulfides connect C30–C47, C37–C52, C46–C58, C70–C90, and C78–C98.

Expressed by the venom gland.

The protein resides in the secreted. This Pimpla hypochondriaca (Parasitoid wasp) protein is Cysteine-rich venom protein 7.